Here is a 453-residue protein sequence, read N- to C-terminus: Phenolic glucoside malonyltransferase 1 (453 aa).

Catalysis depends on His165, which acts as the Proton acceptor. The HXXXD motif signature appears at 165 to 169; the sequence is HVAGD. Malonyl-CoA is bound by residues Lys254, His266, and 268–269; that span reads TS. The active-site Proton acceptor is the Asp394. Positions 394–398 match the DFGWG motif motif; sequence DFGWG.

This sequence belongs to the plant acyltransferase family. Phenolic glucoside malonyltransferase subfamily. In terms of assembly, monomer. Highly expressed in flower. Also expressed in flower bud, stem, root and leaf.

It catalyses the reaction a flavonol 3-O-beta-D-glucoside + malonyl-CoA = a flavonol 3-O-(6-O-malonyl-beta-D-glucoside) + CoA. It carries out the reaction a flavonol 7-O-beta-D-glucoside + malonyl-CoA = a flavonol 7-O-(6-O-malonyl-beta-D-glucoside) + CoA. Functionally, malonyltransferase with broad substrate specificity acting on phenolic glucosides including xenobiotic naphthols. Has activity against flavonoid 7-O-glucosides, flavonoid 3-O-glucosides and naphthol glucosides, and to a lesser extent against coumarin glucosides in vitro. Prefers malonyl-CoA as an acyl donor, but also active with succinyl-CoA and methylmalonyl-CoA, but not with acetyl-CoA. The polypeptide is Phenolic glucoside malonyltransferase 1 (Nicotiana tabacum (Common tobacco)).